The primary structure comprises 204 residues: Ribosomal RNA small subunit methyltransferase G (204 aa).

Residues G69, F74, 123–124 (IE), and R137 each bind S-adenosyl-L-methionine.

This sequence belongs to the methyltransferase superfamily. RNA methyltransferase RsmG family.

Its subcellular location is the cytoplasm. It carries out the reaction guanosine(527) in 16S rRNA + S-adenosyl-L-methionine = N(7)-methylguanosine(527) in 16S rRNA + S-adenosyl-L-homocysteine. Specifically methylates the N7 position of guanine in position 527 of 16S rRNA. In Ruegeria pomeroyi (strain ATCC 700808 / DSM 15171 / DSS-3) (Silicibacter pomeroyi), this protein is Ribosomal RNA small subunit methyltransferase G.